A 378-amino-acid chain; its full sequence is Probable pectin lyase A (378 aa).

The first 18 residues, 1-18 (MKYQDLLAIAGCIANAGA), serve as a signal peptide directing secretion. 2 disulfide bridges follow: Cys81/Cys100 and Cys90/Cys224. Asn127 carries N-linked (GlcNAc...) asparagine glycosylation. Arg254 is an active-site residue. Cys321 and Cys329 are disulfide-bonded.

This sequence belongs to the polysaccharide lyase 1 family.

It is found in the secreted. The catalysed reaction is Eliminative cleavage of (1-&gt;4)-alpha-D-galacturonan methyl ester to give oligosaccharides with 4-deoxy-6-O-methyl-alpha-D-galact-4-enuronosyl groups at their non-reducing ends.. In terms of biological role, pectinolytic enzymes consist of four classes of enzymes: pectin lyase, polygalacturonase, pectin methylesterase and rhamnogalacturonase. Among pectinolytic enzymes, pectin lyase is the most important in depolymerization of pectin, since it cleaves internal glycosidic bonds of highly methylated pectins. The sequence is that of Probable pectin lyase A (pelA) from Aspergillus fumigatus (strain CBS 144.89 / FGSC A1163 / CEA10) (Neosartorya fumigata).